Here is a 70-residue protein sequence, read N- to C-terminus: Large ribosomal subunit protein eL38 (70 aa).

This sequence belongs to the eukaryotic ribosomal protein eL38 family.

The protein is Large ribosomal subunit protein eL38 (RPL38) of Branchiostoma belcheri (Amphioxus).